Reading from the N-terminus, the 145-residue chain is 3-dehydroquinate dehydratase (145 aa).

Residue Tyr-24 is the Proton acceptor of the active site. Substrate is bound by residues Asn-75, His-81, and Asp-88. His-101 functions as the Proton donor in the catalytic mechanism. Residues 102-103 (IS) and Arg-112 each bind substrate.

It belongs to the type-II 3-dehydroquinase family. As to quaternary structure, homododecamer.

The catalysed reaction is 3-dehydroquinate = 3-dehydroshikimate + H2O. Its pathway is metabolic intermediate biosynthesis; chorismate biosynthesis; chorismate from D-erythrose 4-phosphate and phosphoenolpyruvate: step 3/7. In terms of biological role, catalyzes a trans-dehydration via an enolate intermediate. This is 3-dehydroquinate dehydratase from Rhizobium johnstonii (strain DSM 114642 / LMG 32736 / 3841) (Rhizobium leguminosarum bv. viciae).